A 157-amino-acid polypeptide reads, in one-letter code: 17.8 kDa class I heat shock protein (157 aa).

The sHSP domain occupies 41-156; sequence ETSAITNARV…KAQVKSIDIS (116 aa).

Belongs to the small heat shock protein (HSP20) family. In terms of assembly, homodimer under normal physiological conditions. Aggregates in high oligomeric complexes after heat shock. Binds to AKR2A and to chloroplasts. Expressed ubiquitously at low levels under normal physiological conditions.

The protein resides in the cytoplasm. In terms of biological role, cytosolic mediator for sorting and targeting of nascent chloroplast outer envelope membrane (OEM) proteins to the chloroplast. Functions as an AKR2A cofactor to facilitate the targeting of OEP7 to chloroplasts. The protein is 17.8 kDa class I heat shock protein (HSP17.8) of Arabidopsis thaliana (Mouse-ear cress).